A 431-amino-acid polypeptide reads, in one-letter code: Sorting nexin-31 (431 aa).

The PX domain maps to 1 to 107 (MHICIPVTEE…DYFRKLQMDT (107 aa)).

The protein belongs to the sorting nexin family.

In terms of biological role, may be involved in protein trafficking. The sequence is that of Sorting nexin-31 (snx31) from Xenopus laevis (African clawed frog).